The following is a 420-amino-acid chain: Glucose-1-phosphate adenylyltransferase (420 aa).

Residues Y107, G172, 187-188, and S205 each bind alpha-D-glucose 1-phosphate; that span reads EK.

The protein belongs to the bacterial/plant glucose-1-phosphate adenylyltransferase family. As to quaternary structure, homotetramer.

It catalyses the reaction alpha-D-glucose 1-phosphate + ATP + H(+) = ADP-alpha-D-glucose + diphosphate. The protein operates within glycan biosynthesis; glycogen biosynthesis. Functionally, involved in the biosynthesis of ADP-glucose, a building block required for the elongation reactions to produce glycogen. Catalyzes the reaction between ATP and alpha-D-glucose 1-phosphate (G1P) to produce pyrophosphate and ADP-Glc. The chain is Glucose-1-phosphate adenylyltransferase from Sinorhizobium fredii (strain NBRC 101917 / NGR234).